The sequence spans 99 residues: NADH-quinone oxidoreductase subunit K (99 aa).

3 helical membrane passes run 3–23 (PTYY…GVLV), 28–48 (IVVF…LVTF), and 59–79 (VMAF…LAII).

Belongs to the complex I subunit 4L family. NDH-1 is composed of 14 different subunits. Subunits NuoA, H, J, K, L, M, N constitute the membrane sector of the complex.

It is found in the cell membrane. It carries out the reaction a quinone + NADH + 5 H(+)(in) = a quinol + NAD(+) + 4 H(+)(out). In terms of biological role, NDH-1 shuttles electrons from NADH, via FMN and iron-sulfur (Fe-S) centers, to quinones in the respiratory chain. The immediate electron acceptor for the enzyme in this species is believed to be a menaquinone. Couples the redox reaction to proton translocation (for every two electrons transferred, four hydrogen ions are translocated across the cytoplasmic membrane), and thus conserves the redox energy in a proton gradient. This chain is NADH-quinone oxidoreductase subunit K, found in Saccharopolyspora erythraea (strain ATCC 11635 / DSM 40517 / JCM 4748 / NBRC 13426 / NCIMB 8594 / NRRL 2338).